Here is a 267-residue protein sequence, read N- to C-terminus: Apolipoprotein A-I (267 aa).

The N-terminal stretch at 1 to 18 is a signal peptide; it reads MKAAVLTLAVLFLTGSQA. 2 consecutive repeat copies span residues 68–89 and 90–111. The 10 X approximate tandem repeats stretch occupies residues 68–267; the sequence is LKLLDNWDSV…EEYTKKLNTQ (200 aa). Methionine sulfoxide is present on methionine 110. The stretch at 112 to 122 is one 3; half-length repeat; that stretch reads KDLEEVKAKVQ. 5 tandem repeats follow at residues 123–144, 145–166, 167–188, 189–210, and 211–232. At methionine 136 the chain carries Methionine sulfoxide. The stretch at 233–243 is one 9; half-length repeat; sequence PALEDLRQGLL. Repeat unit 10 spans residues 244-267; sequence PVLESFKVSFLSALEEYTKKLNTQ.

The protein belongs to the apolipoprotein A1/A4/E family. As to quaternary structure, homodimer. Interacts with APOA1BP and CLU. Component of a sperm activating protein complex (SPAP), consisting of APOA1, an immunoglobulin heavy chain, an immunoglobulin light chain and albumin. Interacts with NDRG1. Interacts with SCGB3A2. Interacts with NAXE and YJEFN3. In terms of processing, glycosylated. Palmitoylated. Post-translationally, phosphorylation sites are present in the extracellular medium. As to expression, major protein of plasma HDL, also found in chylomicrons.

The protein resides in the secreted. In terms of biological role, participates in the reverse transport of cholesterol from tissues to the liver for excretion by promoting cholesterol efflux from tissues and by acting as a cofactor for the lecithin cholesterol acyltransferase (LCAT). As part of the SPAP complex, activates spermatozoa motility. This Pan paniscus (Pygmy chimpanzee) protein is Apolipoprotein A-I (APOA1).